Reading from the N-terminus, the 436-residue chain is EPS I polysaccharide export inner membrane protein EpsE (436 aa).

12 consecutive transmembrane segments (helical) span residues 20–40 (VLGLGAAVASRGAVFVSNILL), 49–69 (FGLFSYAYVTALNLGLFLATG), 91–111 (LCAFIVLLMALIAVAAAALYL), 133–153 (AAIVLIATAFTQALQSFQYAM), 160–180 (ATISIGAAVLLLTMLWAMGPI), 185–205 (LALTIFLAVNAGAAVSQLLVL), 234–254 (VLTTSMGAPVHWICLSMLAAM), 261–281 (LALFSVAFQWYIAITFIPATL), 307–327 (ALLFGGGLSLALGCASFLLAG), 341–361 (AASSMRSLSVAAALCGVSVLL), 375–395 (FAMAAVYSVIYVAASYLALRL), and 396–416 (GFGATSIGLAMSAAYCCLILF).

The protein to E.coli bicyclomycin resistance protein (BCR).

It localises to the cell inner membrane. Probably involved in polymerization and/or export of exopolysaccharide EPS I which functions as a virulence factor. May play a role in export of EPS I or its intermediates across the membranes. This is EPS I polysaccharide export inner membrane protein EpsE (epsE) from Ralstonia solanacearum (Pseudomonas solanacearum).